The chain runs to 277 residues: Small ribosomal subunit protein uS3 (277 aa).

Residues 43–111 (IRQLMSTGME…QVQLNILEVK (69 aa)) enclose the KH type-2 domain. Residues 218-228 (QQAAAAPSRGR) show a composition bias toward low complexity. The disordered stretch occupies residues 218–277 (QQAAAAPSRGRGASDRPGRPGGADRGDRRRRTDRPAAEAAPAAEAPAVEAAAPAVEGGQA). Over residues 229–244 (GASDRPGRPGGADRGD) the composition is skewed to basic and acidic residues. A compositionally biased stretch (low complexity) spans 254-277 (AEAAPAAEAPAVEAAAPAVEGGQA).

It belongs to the universal ribosomal protein uS3 family. Part of the 30S ribosomal subunit. Forms a tight complex with proteins S10 and S14.

Binds the lower part of the 30S subunit head. Binds mRNA in the 70S ribosome, positioning it for translation. The chain is Small ribosomal subunit protein uS3 from Arthrobacter sp. (strain FB24).